Here is a 287-residue protein sequence, read N- to C-terminus: Eukaryotic translation initiation factor 3 subunit G (287 aa).

Disordered regions lie at residues 1–34 and 159–184; these read MSKL…KDGT and TAGG…YVPP. One can recognise an RRM domain in the interval 207 to 285; the sequence is ATLRVTNVSE…LILRVEFAKR (79 aa).

This sequence belongs to the eIF-3 subunit G family. Component of the eukaryotic translation initiation factor 3 (eIF-3) complex.

The protein resides in the cytoplasm. Functionally, RNA-binding component of the eukaryotic translation initiation factor 3 (eIF-3) complex, which is involved in protein synthesis of a specialized repertoire of mRNAs and, together with other initiation factors, stimulates binding of mRNA and methionyl-tRNAi to the 40S ribosome. The eIF-3 complex specifically targets and initiates translation of a subset of mRNAs involved in cell proliferation. This subunit can bind 18S rRNA. The sequence is that of Eukaryotic translation initiation factor 3 subunit G (tif35) from Aspergillus oryzae (strain ATCC 42149 / RIB 40) (Yellow koji mold).